We begin with the raw amino-acid sequence, 122 residues long: uncharacterized protein (122 aa).

3 helical membrane-spanning segments follow: residues 33 to 53 (ALGL…LTIP), 58 to 78 (VLGV…LLRW), and 97 to 117 (PGYL…LVVA).

To E.coli YidH.

The protein resides in the cell membrane. This is an uncharacterized protein from Mycobacterium tuberculosis (strain CDC 1551 / Oshkosh).